A 232-amino-acid chain; its full sequence is 2-C-methyl-D-erythritol 4-phosphate cytidylyltransferase (232 aa).

Belongs to the IspD/TarI cytidylyltransferase family. IspD subfamily.

It catalyses the reaction 2-C-methyl-D-erythritol 4-phosphate + CTP + H(+) = 4-CDP-2-C-methyl-D-erythritol + diphosphate. It functions in the pathway isoprenoid biosynthesis; isopentenyl diphosphate biosynthesis via DXP pathway; isopentenyl diphosphate from 1-deoxy-D-xylulose 5-phosphate: step 2/6. In terms of biological role, catalyzes the formation of 4-diphosphocytidyl-2-C-methyl-D-erythritol from CTP and 2-C-methyl-D-erythritol 4-phosphate (MEP). This chain is 2-C-methyl-D-erythritol 4-phosphate cytidylyltransferase, found in Neorickettsia sennetsu (strain ATCC VR-367 / Miyayama) (Ehrlichia sennetsu).